The sequence spans 302 residues: Galactofuranosyltransferase GlfT1 (302 aa).

Belongs to the glycosyltransferase 2 family.

It localises to the cell membrane. Its subcellular location is the secreted. The protein localises to the cell wall. The enzyme catalyses alpha-L-rhamnosyl-(1-&gt;3)-N-acetyl-alpha-D-glucosaminyl-diphospho-trans,octa-cis-decaprenol + 2 UDP-alpha-D-galactofuranose = beta-D-galactofuranosyl-(1-&gt;5)-beta-D-galactofuranosyl-(1-&gt;4)-alpha-L-rhamnosyl-(1-&gt;3)-N-acetyl-alpha-D-glucosaminyl-diphospho-trans,octa-cis-decaprenol + 2 UDP + 2 H(+). The protein operates within cell wall biogenesis; cell wall polysaccharide biosynthesis. Functionally, involved in the biosynthesis of the arabinogalactan (AG) region of the mycolylarabinogalactan-peptidoglycan (mAGP) complex, an essential component of the mycobacterial cell wall. Catalyzes the transfer of the first two galactofuranosyl (Galf) units from UDP-galactofuranose (UDP-Galf) onto the rhamnosyl-GlcNAc-diphospho-decaprenol (Rha-GlcNAc-PP-C50) acceptor, yielding galactofuranosyl-galactofuranosyl-rhamnosyl-GlcNAc-diphospho-decaprenol (Galf-Galf-Rha-GlcNAc-PP-C50). Thus, GlfT1 is the initiator of galactan synthesis, while GlfT2 continues with the subsequent polymerization events. This is Galactofuranosyltransferase GlfT1 from Mycolicibacterium smegmatis (strain ATCC 700084 / mc(2)155) (Mycobacterium smegmatis).